Consider the following 828-residue polypeptide: Potassium channel SKOR (828 aa).

At 1-86 the chain is on the cytoplasmic side; the sequence is MGGSSGGGVS…PDNRWYKAWT (86 aa). Residues 87–107 form a helical membrane-spanning segment; sequence MFILIWALYSSFFTPLEFGFF. Residues 108–114 lie on the Extracellular side of the membrane; it reads RGLPENL. Residues 115–135 form a helical membrane-spanning segment; the sequence is FILDIAGQIAFLVDIVLTFFV. Residues 136 to 158 are Cytoplasmic-facing; the sequence is AYRDSRTYRMIYKRSSIALRYLK. Residues 159–179 traverse the membrane as a helical segment; it reads STFIIDLLACMPWDIIYKAAG. Topologically, residues 180-185 are extracellular; the sequence is EKEEVR. A helical; Voltage-sensor membrane pass occupies residues 186-206; that stretch reads YLLLIRLYRVHRVILFFHKME. Residues 207–220 lie on the Cytoplasmic side of the membrane; that stretch reads KDIRINYLFTRIVK. A helical membrane pass occupies residues 221–241; it reads LIFVELYCTHTAACIFYYLAT. Over 242–276 the chain is Extracellular; sequence TLPASQEGYTWIGSLKLGDYSYSKFREIDLWTRYT. The pore-forming intramembrane region spans 277 to 296; that stretch reads TSMYFAVVTMATVGYGDIHA. Over 297 to 300 the chain is Extracellular; the sequence is VNMR. The chain crosses the membrane as a helical span at residues 301 to 321; the sequence is EMIFAMVYISFDMILGAYLIG. The Cytoplasmic portion of the chain corresponds to 322–828; it reads NMTALIVKGS…GQKLYLAVET (507 aa). 403–523 is an a nucleoside 3',5'-cyclic phosphate binding site; that stretch reads LFRGCSSEFI…RRILNNLLEG (121 aa). ANK repeat units follow at residues 545-576, 580-609, 613-642, 644-673, 677-706, and 710-740; these read EAEL…DPNK, DGRS…DVNI, LGST…TLNI, NAGT…DPNS, DHRT…NVLA, and WGNT…QISS. The 73-residue stretch at 756–828 folds into the KHA domain; the sequence is KCTVYFSHPG…GQKLYLAVET (73 aa).

This sequence belongs to the potassium channel family. Plant (TC 1.A.1.4) subfamily. The potassium channel is probably composed of a homo- or heterotetrameric complex of pore-forming subunits. Expressed in root pericycle and xylem parenchyma, and in flower at a lower level.

It localises to the membrane. In terms of biological role, highly selective outward-rectifying potassium channel. Involved in potassium release into the xylem sap toward the shoots. Assuming opened or closed conformations in response to the voltage difference across the membrane, the channel is activated by depolarization. The voltage-dependence of the channel is abolished by internal or external acidification. May interact with the cytoskeleton or with regulatory proteins. This chain is Potassium channel SKOR (SKOR), found in Arabidopsis thaliana (Mouse-ear cress).